Reading from the N-terminus, the 430-residue chain is Inner membrane transport protein YbaT (430 aa).

Topologically, residues 1–14 (MMNTEGNNGNKPLG) are cytoplasmic. Residues 15-35 (LWNVVSIGIGAMVGAGIFALL) form a helical membrane-spanning segment. Topologically, residues 36-38 (GQA) are periplasmic. The chain crosses the membrane as a helical span at residues 39 to 59 (ALLMEASTWVAFAFGGIVAMF). The Cytoplasmic portion of the chain corresponds to 60 to 88 (SGYAYARLGASYPSNGGIIDFFRRGLGNG). Residues 89 to 109 (VFSLALSLLYLLTLAVSIAMV) form a helical membrane-spanning segment. The Periplasmic portion of the chain corresponds to 110–128 (ARAFGAYAVQFLHEGSQEE). Residues 129-149 (HLILLYALGIIAVMTLFNSLS) form a helical membrane-spanning segment. The Cytoplasmic segment spans residues 150–157 (NHAVGRLE). The chain crosses the membrane as a helical span at residues 158 to 178 (VILVGIKMMILLLLIIAGVWS). The Periplasmic portion of the chain corresponds to 179 to 192 (LQPAHISVSAPPSS). A helical membrane pass occupies residues 193–213 (GAFFSCIGITFLAYAGFGMMA). Residues 214–228 (NAADKVKDPQVIMPR) lie on the Cytoplasmic side of the membrane. Residues 229 to 249 (AFLVAIGVTTLLYISLALVLL) traverse the membrane as a helical segment. Over 250–272 (SDVSALELEKYADTAVAQAASPL) the chain is Periplasmic. The chain crosses the membrane as a helical span at residues 273-293 (LGHVGYVIVVIGALLATASAI). The Cytoplasmic portion of the chain corresponds to 294 to 325 (NANLFAVFNIMDNMGSERELPKLMNKSLWRQS). The helical transmembrane segment at 326–346 (TWGNIIVVVLIMLMTAALNLG) threads the bilayer. A topological domain (periplasmic) is located at residue S347. The chain crosses the membrane as a helical span at residues 348–368 (LASVASATFLICYLAVFVVAI). At 369-379 (RLRHDIHASLP) the chain is on the cytoplasmic side. A helical transmembrane segment spans residues 380 to 400 (ILIVGTLVMLLVIVGFIYSLW). Topologically, residues 401–403 (SQG) are periplasmic. Residues 404 to 424 (SRALIWIIGSLLLSLIVAMVM) traverse the membrane as a helical segment. Topologically, residues 425–430 (KRNKTV) are cytoplasmic.

The protein belongs to the amino acid-polyamine-organocation (APC) superfamily.

Its subcellular location is the cell inner membrane. Functionally, probable amino-acid or metabolite transport protein. This is Inner membrane transport protein YbaT (ybaT) from Escherichia coli (strain K12).